The chain runs to 70 residues: Protein SlyX homolog (70 aa).

The protein belongs to the SlyX family.

This Shewanella oneidensis (strain ATCC 700550 / JCM 31522 / CIP 106686 / LMG 19005 / NCIMB 14063 / MR-1) protein is Protein SlyX homolog.